Consider the following 196-residue polypeptide: Large ribosomal subunit protein uL18 (196 aa).

It belongs to the universal ribosomal protein uL18 family. Part of the 50S ribosomal subunit. Contacts the 5S and 23S rRNAs.

This is one of the proteins that bind and probably mediate the attachment of the 5S RNA into the large ribosomal subunit, where it forms part of the central protuberance. This is Large ribosomal subunit protein uL18 from Sulfurisphaera tokodaii (strain DSM 16993 / JCM 10545 / NBRC 100140 / 7) (Sulfolobus tokodaii).